Consider the following 121-residue polypeptide: Dihydroneopterin aldolase (121 aa).

2 residues coordinate substrate: glutamate 16 and methionine 111.

This sequence belongs to the archaeal dihydroneopterin aldolase family. In terms of assembly, homotetramer.

The catalysed reaction is 7,8-dihydroneopterin = 6-hydroxymethyl-7,8-dihydropterin + glycolaldehyde. It functions in the pathway cofactor biosynthesis; 5,6,7,8-tetrahydromethanopterin biosynthesis. In terms of biological role, catalyzes the conversion of 7,8-dihydroneopterin (H2Neo) to 6-hydroxymethyl-7,8-dihydropterin (6-HMD). In Methanopyrus kandleri (strain AV19 / DSM 6324 / JCM 9639 / NBRC 100938), this protein is Dihydroneopterin aldolase.